Reading from the N-terminus, the 292-residue chain is MKDIATPNRTKDIVEKYGFSFKKSLGQNFLIDTNVLNRIVDHAEIGSESGAIEIGPGIGALTEQLAKRAKKVVAFEIDQRLLPILDETLAPYGNVTVINKDVLKADVHEVFSEQFEEGQDVMVVANLPYYITTPILFKLLEEKLPVRGFVVMMQKEVGDRLAAKPGTKEYGSLSIAIQYYTEVETVMTVPRTVFVPQPNVDSAIIRLLKRPKPVVEVTDEIFFFEVVRASFAQRRKTLMNNLSNNLNGFPKDKELLDRILTEVGIDPKRRGETLSIEEFATLSNALVLHKLS.

6 residues coordinate S-adenosyl-L-methionine: Asn28, Leu30, Gly55, Glu76, Asp101, and Asn126.

It belongs to the class I-like SAM-binding methyltransferase superfamily. rRNA adenine N(6)-methyltransferase family. RsmA subfamily.

Its subcellular location is the cytoplasm. The enzyme catalyses adenosine(1518)/adenosine(1519) in 16S rRNA + 4 S-adenosyl-L-methionine = N(6)-dimethyladenosine(1518)/N(6)-dimethyladenosine(1519) in 16S rRNA + 4 S-adenosyl-L-homocysteine + 4 H(+). Its function is as follows. Specifically dimethylates two adjacent adenosines (A1518 and A1519) in the loop of a conserved hairpin near the 3'-end of 16S rRNA in the 30S particle. May play a critical role in biogenesis of 30S subunits. The protein is Ribosomal RNA small subunit methyltransferase A of Bacillus thuringiensis (strain Al Hakam).